The sequence spans 215 residues: Cytochrome b6 (215 aa).

Residues 32–52 form a helical membrane-spanning segment; that stretch reads IFYCLGGITLTCFLVQVATGF. Cys-35 contributes to the heme c binding site. The heme b site is built by His-86 and His-100. Transmembrane regions (helical) follow at residues 90-110, 116-136, and 186-206; these read ASMM…TGGF, LTWV…VTGY, and LHTF…FLMI. Heme b is bound by residues His-187 and His-202.

It belongs to the cytochrome b family. PetB subfamily. As to quaternary structure, the 4 large subunits of the cytochrome b6-f complex are cytochrome b6, subunit IV (17 kDa polypeptide, PetD), cytochrome f and the Rieske protein, while the 4 small subunits are PetG, PetL, PetM and PetN. The complex functions as a dimer. The cofactor is heme b. Heme c is required as a cofactor.

The protein localises to the plastid. It is found in the chloroplast thylakoid membrane. Functionally, component of the cytochrome b6-f complex, which mediates electron transfer between photosystem II (PSII) and photosystem I (PSI), cyclic electron flow around PSI, and state transitions. This Citrus sinensis (Sweet orange) protein is Cytochrome b6.